A 65-amino-acid chain; its full sequence is Small ribosomal subunit protein bS21 (65 aa).

Belongs to the bacterial ribosomal protein bS21 family.

The chain is Small ribosomal subunit protein bS21 from Geotalea daltonii (strain DSM 22248 / JCM 15807 / FRC-32) (Geobacter daltonii).